The chain runs to 209 residues: Small ribosomal subunit protein uS4 (209 aa).

One can recognise an S4 RNA-binding domain in the interval 98–161; the sequence is TRLDNVVYRM…AKQLRVQEAL (64 aa).

Belongs to the universal ribosomal protein uS4 family. Part of the 30S ribosomal subunit. Contacts protein S5. The interaction surface between S4 and S5 is involved in control of translational fidelity.

In terms of biological role, one of the primary rRNA binding proteins, it binds directly to 16S rRNA where it nucleates assembly of the body of the 30S subunit. Functionally, with S5 and S12 plays an important role in translational accuracy. The polypeptide is Small ribosomal subunit protein uS4 (Stenotrophomonas maltophilia (strain R551-3)).